Here is a 531-residue protein sequence, read N- to C-terminus: Ceramide kinase (531 aa).

The segment at 1-115 (MGAMGAAEPL…SADEQLCHLW (115 aa)) is essential for enzyme activity. The segment at 1 to 125 (MGAMGAAEPL…LQTLRGLLES (125 aa)) is required for binding to sulfatide and phosphoinositides. Residues 128 to 278 (SRPKHLLVFI…IDVSSVHYHN (151 aa)) form the DAGKc domain. Residues 138 to 140 (NPF) and 170 to 174 (TEHAN) contribute to the ATP site. 195–198 (GGDG) is a binding site for substrate. Aspartate 197 (proton donor/acceptor) is an active-site residue. ATP contacts are provided by residues glutamate 202, 239–241 (GST), arginine 304, and arginine 310. 2 positions are modified to phosphoserine: serine 340 and serine 408. 502–504 (DGE) is an ATP binding site.

The cofactor is Ca(2+). Requires Mg(2+) as cofactor. In terms of tissue distribution, high level expression in heart, brain, testis and pancreas; low expression in spleen, liver and lung; not detected in skeletal muscle.

The protein localises to the cytoplasm. It localises to the cell membrane. The catalysed reaction is an N-acylsphing-4-enine + ATP = an N-acylsphing-4-enine 1-phosphate + ADP + H(+). It catalyses the reaction N-(hexanoyl)sphing-4-enine + ATP = N-hexanoylsphing-4-enine 1-phosphate + ADP + H(+). The enzyme catalyses N-(acetyl)-sphing-4-enine + ATP = N-(acetyl)-sphing-4-enine-1-phosphate + ADP + H(+). It carries out the reaction N-hexadecanoylsphing-4-enine + ATP = N-(hexadecanoyl)-sphing-4-enine-1-phosphate + ADP + H(+). The catalysed reaction is N-hexanoyl-(4R)-hydroxysphinganine + ATP = N-hexanoyl-(4R)-hydroxysphinganine-1-phosphate + ADP + H(+). Functionally, catalyzes specifically the phosphorylation of ceramide to form ceramide 1-phosphate. Acts efficiently on natural and analog ceramides (C6, C8, C16 ceramides, and C8-dihydroceramide), to a lesser extent on C2-ceramide and C6-dihydroceramide, but not on other lipids, such as various sphingosines. Shows a greater preference for D-erythro isomer of ceramides. Binds phosphoinositides. This chain is Ceramide kinase (Cerk), found in Mus musculus (Mouse).